Reading from the N-terminus, the 383-residue chain is GTPase-interacting component 2 (383 aa).

The segment at 63 to 106 is disordered; sequence SNKKNIELPPLSPNSHPSCHHRRSNSNSAKSKESSSSSSSANKT. Positions 87–105 are enriched in low complexity; sequence NSNSAKSKESSSSSSSANK. In terms of domain architecture, CRIB spans 134–147; that stretch reads ISTPFDFQHISHAD. A compositionally biased stretch (polar residues) spans 155-165; it reads EQLQEPSSLST. The tract at residues 155–189 is disordered; the sequence is EQLQEPSSLSTEIKDDYTSSSSKRDSKSLNKAFVT. The segment covering 166 to 182 has biased composition (basic and acidic residues); sequence EIKDDYTSSSSKRDSKS. Phosphoserine occurs at positions 254, 258, 337, 345, and 367. The segment at 319–361 is disordered; sequence ETPNSNKDSAKAFFPSRQSPLPKRRNSIATPSPQSKFSYSDSP. Over residues 345-361 the composition is skewed to polar residues; it reads SIATPSPQSKFSYSDSP.

The protein belongs to the BORG/CEP family. Interacts with GTP-bound CDC42.

The protein resides in the bud neck. Its subcellular location is the bud tip. It is found in the cytoplasm. It localises to the cell cortex. The protein localises to the cytoskeleton. In terms of biological role, required for cell size and shape control, bud site selection, bud emergence, actin cytoskeletal organization, mitotic spindle orientation/positioning, and mating projection formation in response to mating pheromone. In Saccharomyces cerevisiae (strain ATCC 204508 / S288c) (Baker's yeast), this protein is GTPase-interacting component 2 (GIC2).